We begin with the raw amino-acid sequence, 447 residues long: ATP-dependent protease ATPase subunit HslU (447 aa).

Residues Ile-18, 60 to 65, Asp-259, Glu-325, and Arg-397 each bind ATP; that span reads GVGKTE.

This sequence belongs to the ClpX chaperone family. HslU subfamily. In terms of assembly, a double ring-shaped homohexamer of HslV is capped on each side by a ring-shaped HslU homohexamer. The assembly of the HslU/HslV complex is dependent on binding of ATP.

It is found in the cytoplasm. Functionally, ATPase subunit of a proteasome-like degradation complex; this subunit has chaperone activity. The binding of ATP and its subsequent hydrolysis by HslU are essential for unfolding of protein substrates subsequently hydrolyzed by HslV. HslU recognizes the N-terminal part of its protein substrates and unfolds these before they are guided to HslV for hydrolysis. This Burkholderia thailandensis (strain ATCC 700388 / DSM 13276 / CCUG 48851 / CIP 106301 / E264) protein is ATP-dependent protease ATPase subunit HslU.